The primary structure comprises 132 residues: Small ribosomal subunit protein uS8 (132 aa).

Belongs to the universal ribosomal protein uS8 family. In terms of assembly, part of the 30S ribosomal subunit. Contacts proteins S5 and S12.

One of the primary rRNA binding proteins, it binds directly to 16S rRNA central domain where it helps coordinate assembly of the platform of the 30S subunit. The sequence is that of Small ribosomal subunit protein uS8 from Nitrobacter hamburgensis (strain DSM 10229 / NCIMB 13809 / X14).